Consider the following 450-residue polypeptide: MQPPELEIGMPKRHREHIRKNLNILVEWTNYERLAMECVQQGILTVQMLRNTQDLNGKPFNMDEKDVRVEQHRRLLLKITQRGPTAYNLLINALRNINCLDAAVLLESVDESDSRPPFISLNERRTSRKSADIVDTPSPEASEGPCVSKLRNEPLGALTPYVGVVDGPEVKKSKKIHGGDSAILGTYKMQSRFNRGVLLMVNIMDYPDQNRRRIGAEKDSKSLIHLFQELNFTIFPYGNVNQDQFFKLLTMVTSSSYVQNTECFVMVLMTHGNSVEGKEKVEFCDGSVVDMQKIKDHFQTAKCPYLVNKPKVLMFPFCRGDEYDLGHPKNQGNLMEPVYTAQEEKWPDTQTEGIPSPSTNVPSLADTLVCYANTPGYVTHRDLDTGSWYIQKFCQVMADHAHDTDLEDILKKTSEAVGNKRTKKGSMQTGAYDNLGFNKKLYFNPGFFNE.

Positions 1–134 (MQPPELEIGM…RTSRKSADIV (134 aa)) are excised as a propeptide. Positions 64–109 (EKDVRVEQHRRLLLKITQRGPTAYNLLINALRNINCLDAAVLLESV) constitute a CARD domain. Positions 114–125 (SRPPFISLNERR) are required for binding Diap1. Active-site residues include His271 and Cys318. The propeptide occupies 321–324 (DEYD).

It belongs to the peptidase C14A family. As to quaternary structure, interacts (via residues 114-125) with Diap1 (via BIR 2 domain); binding blocks Dronc-mediated cell death. Can form a stable complex with Drice. Rpr, hid and grim can out-compete Dronc for binding Diap1, therefore removing Diap1-mediated ubiquitination. Interacts (via CARD domain) with Dark (via Dark CARD and WD domains); the interaction stimulates Dark oligomerization to form the apoptosome and brings pairs of Dronc molecules together on the apoptosome to facilitate their dimerization and activation by autocatalytic cleavage. Binding to Dark stimulates apoptosome assembly. After autocatalytic cleavage the Dronc caspase domain dissociates from the apoptosome but the CARD domain remains associated. Ubiquitinated by Diap1, leading to its subsequent degradation. In terms of tissue distribution, ubiquitously expressed in embryos during early stages of development. In late third instar larvae, dramatic up-regulation in salivary glands and midgut before histolysis of these tissues.

The protein resides in the cytoplasm. The enzyme catalyses Strict requirement for an Asp residue at position P1 and with a marked preference for His at position P2. It has a preferred cleavage sequence of Leu-Gly-His-Asp-|-Xaa.. With respect to regulation, zymogen activated by autocatalytic cleavage; association with the Dark apoptosome brings multiple molecules together to facilitate their dimerization and activation by autocatalytic cleavage. Its function is as follows. Involved in the activation cascade of caspases responsible for apoptosis execution. Effector of steroid-mediated apoptosis during insect metamorphosis. Overexpression promotes programmed cell death. Interaction with Diap1 is required to suppress Dronc-mediated cell death; via Diap1-mediated ubiquitination of Dronc. Rate-limiting caspase in rpr, grim and hid death pathway. Recruited to the Dark apoptosome, an adapter protein complex that mediates activation of the caspase cascade in programmed cell death initiated by the intrinsic apoptosis pathway. Association with the Dark apoptosome stimulates autocatalytic cleavage and activation of Dronc, promoting Dronc-mediated cleavage of downstream effector caspases such as Drice. This Drosophila melanogaster (Fruit fly) protein is Caspase Dronc.